A 61-amino-acid chain; its full sequence is Protein translocase subunit SecE (61 aa).

Residues 38 to 58 (GIGMILIGLIGLVIRMIGYLI) traverse the membrane as a helical segment.

The protein belongs to the SecE/SEC61-gamma family. In terms of assembly, component of the Sec protein translocase complex. Heterotrimer consisting of SecY (alpha), SecG (beta) and SecE (gamma) subunits. The heterotrimers can form oligomers, although 1 heterotrimer is thought to be able to translocate proteins. Interacts with the ribosome. May interact with SecDF, and other proteins may be involved.

Its subcellular location is the cell membrane. Its function is as follows. Essential subunit of the Sec protein translocation channel SecYEG. Clamps together the 2 halves of SecY. May contact the channel plug during translocation. This is Protein translocase subunit SecE from Thermococcus onnurineus (strain NA1).